A 178-amino-acid polypeptide reads, in one-letter code: TM2 domain-containing protein biscotti (178 aa).

An N-terminal signal peptide occupies residues 1–18 (MFPVLLLLLFFFAKETHQ). The Extracellular portion of the chain corresponds to 19–99 (INVDCNELQM…YHLDTTLLLS (81 aa)). N-linked (GlcNAc...) asparagine glycosylation is found at Asn-69 and Asn-75. Residues 94–137 (TTLLLSVFLGMFGVDRFYLGYPGIGLLKFCTLGGMFLGQLIDIV) enclose the TM2 domain. A helical membrane pass occupies residues 100 to 120 (VFLGMFGVDRFYLGYPGIGLL). The Cytoplasmic segment spans residues 121–124 (KFCT). Residues 125-145 (LGGMFLGQLIDIVLIALQVVG) traverse the membrane as a helical segment. Over 146-178 (PADGSAYVIPYYGAGIHIVRSDNTTYRLPRDDW) the chain is Extracellular. The N-linked (GlcNAc...) asparagine glycan is linked to Asn-168.

Belongs to the TM2 family.

Its subcellular location is the membrane. Positive regulator of Notch signaling. Maternal neurogenic factor involved in Notch signaling-dependent neuroectodermal specification during early embryogenesis. Functions cooperatively with amx/TM2D3 and amrt/TM2D2. The protein is TM2 domain-containing protein biscotti of Drosophila melanogaster (Fruit fly).